A 312-amino-acid polypeptide reads, in one-letter code: 4-diphosphocytidyl-2-C-methyl-D-erythritol kinase (312 aa).

The active site involves Lys10. ATP is bound at residue 105–115 (PVAGGMAGGSA). The active site involves Asp146.

This sequence belongs to the GHMP kinase family. IspE subfamily.

The enzyme catalyses 4-CDP-2-C-methyl-D-erythritol + ATP = 4-CDP-2-C-methyl-D-erythritol 2-phosphate + ADP + H(+). The protein operates within isoprenoid biosynthesis; isopentenyl diphosphate biosynthesis via DXP pathway; isopentenyl diphosphate from 1-deoxy-D-xylulose 5-phosphate: step 3/6. Its function is as follows. Catalyzes the phosphorylation of the position 2 hydroxy group of 4-diphosphocytidyl-2C-methyl-D-erythritol. This is 4-diphosphocytidyl-2-C-methyl-D-erythritol kinase from Corynebacterium glutamicum (strain R).